The following is a 242-amino-acid chain: UPF0309 protein Oant_1457 (242 aa).

Residues 30–214 (AAELITAAAL…AKLVGKGDAP (185 aa)) enclose the SIS domain.

It belongs to the UPF0309 family.

This Brucella anthropi (strain ATCC 49188 / DSM 6882 / CCUG 24695 / JCM 21032 / LMG 3331 / NBRC 15819 / NCTC 12168 / Alc 37) (Ochrobactrum anthropi) protein is UPF0309 protein Oant_1457.